Reading from the N-terminus, the 298-residue chain is Pyridoxal 5'-phosphate synthase subunit PdxS (298 aa).

D-ribose 5-phosphate is bound at residue Asp24. Catalysis depends on Lys81, which acts as the Schiff-base intermediate with D-ribose 5-phosphate. Gly153 serves as a coordination point for D-ribose 5-phosphate. Arg165 is a D-glyceraldehyde 3-phosphate binding site. D-ribose 5-phosphate contacts are provided by residues Gly214 and 235 to 236 (GS).

It belongs to the PdxS/SNZ family. In the presence of PdxT, forms a dodecamer of heterodimers.

It carries out the reaction aldehydo-D-ribose 5-phosphate + D-glyceraldehyde 3-phosphate + L-glutamine = pyridoxal 5'-phosphate + L-glutamate + phosphate + 3 H2O + H(+). Its pathway is cofactor biosynthesis; pyridoxal 5'-phosphate biosynthesis. Catalyzes the formation of pyridoxal 5'-phosphate from ribose 5-phosphate (RBP), glyceraldehyde 3-phosphate (G3P) and ammonia. The ammonia is provided by the PdxT subunit. Can also use ribulose 5-phosphate and dihydroxyacetone phosphate as substrates, resulting from enzyme-catalyzed isomerization of RBP and G3P, respectively. The chain is Pyridoxal 5'-phosphate synthase subunit PdxS from Halalkalibacterium halodurans (strain ATCC BAA-125 / DSM 18197 / FERM 7344 / JCM 9153 / C-125) (Bacillus halodurans).